A 391-amino-acid polypeptide reads, in one-letter code: Oxytocin receptor (391 aa).

The Extracellular segment spans residues 1–38 (MEGAFAANWSAEAVNGSAAPPGTEGNRTAGPPQRNEAL). 3 N-linked (GlcNAc...) asparagine glycosylation sites follow: Asn8, Asn15, and Asn26. Residues 39–63 (ARVEVAVLSLILFLALSGNACVLLA) form a helical membrane-spanning segment. At 64–74 (LRTTRHKHSRL) the chain is on the cytoplasmic side. Residues 75–97 (FFFMKHLSIADLAVAVFQVLPQL) traverse the membrane as a helical segment. The Extracellular portion of the chain corresponds to 98 to 113 (LWDITFRFYGPDLLCR). A disulfide bridge links Cys112 with Cys187. A helical membrane pass occupies residues 114–135 (LVKYLQVVGMFASTYLLLLMSL). At 136–154 (DRCLAICQPLRSLRRRTDR) the chain is on the cytoplasmic side. The chain crosses the membrane as a helical span at residues 155–175 (LAVLATWLGCLVASAPQVHIF). Over 176–202 (SLREVADGVFDCWAVFIQPWGPKAYIT) the chain is Extracellular. Residues 203–225 (WITLAVYIVPVIVLAACYGLISF) form a helical membrane-spanning segment. The Cytoplasmic portion of the chain corresponds to 226–277 (KIWQNLRLKTEAAAAEASAGAEGAAADCAGRAALARVSNVKLISKAKIRTVK). The chain crosses the membrane as a helical span at residues 278-296 (MTFIVVLAFIVCWTPFFFK). At 297 to 311 (QMWSVWDADAPKEAS) the chain is on the extracellular side. Residues 312–334 (AFIIAMLLASLNSCCNPWIYMLF) form a helical membrane-spanning segment. The Cytoplasmic segment spans residues 335–391 (TGHLFQDLVQRFLCCSFRRLKGSQLGETSVTKKIHSYTFVLSRHSSSQRSCSQPSTV). Phosphoserine is present on Ser370.

The protein belongs to the G-protein coupled receptor 1 family. Vasopressin/oxytocin receptor subfamily.

The protein resides in the cell membrane. Its function is as follows. Receptor for oxytocin. The activity of this receptor is mediated by G proteins which activate a phosphatidylinositol-calcium second messenger system. The polypeptide is Oxytocin receptor (OXTR) (Ovis aries (Sheep)).